A 553-amino-acid polypeptide reads, in one-letter code: 5'-nucleotidase (553 aa).

The N-terminal stretch at 1 to 21 (MKQGLILKSVLSAAIIASLAG) is a signal peptide. Cys22 carries N-palmitoyl cysteine lipidation. Residue Cys22 is the site of S-diacylglycerol cysteine attachment. Residues Asp45, His47, Asp88, Asn120, His221, His256, and Gln258 each contribute to the a divalent metal cation site. Residues Phe432 and 501 to 507 (FNAAGGD) contribute to the substrate site.

Belongs to the 5'-nucleotidase family. Chloride serves as cofactor. Requires Mg(2+) as cofactor.

The protein resides in the cell outer membrane. The enzyme catalyses a ribonucleoside 5'-phosphate + H2O = a ribonucleoside + phosphate. Functionally, degradation of extracellular 5'-nucleotides for nutritional needs. This is 5'-nucleotidase (nutA) from Vibrio cholerae serotype O1 (strain ATCC 39315 / El Tor Inaba N16961).